We begin with the raw amino-acid sequence, 264 residues long: S-adenosylmethionine decarboxylase proenzyme (264 aa).

Residue Ser112 is the Schiff-base intermediate with substrate; via pyruvic acid of the active site. Ser112 carries the post-translational modification Pyruvic acid (Ser); by autocatalysis. His117 functions as the Proton acceptor; for processing activity in the catalytic mechanism. Residue Cys140 is the Proton donor; for catalytic activity of the active site.

The protein belongs to the prokaryotic AdoMetDC family. Type 2 subfamily. As to quaternary structure, heterooctamer of four alpha and four beta chains arranged as a tetramer of alpha/beta heterodimers. Pyruvate is required as a cofactor. Post-translationally, is synthesized initially as an inactive proenzyme. Formation of the active enzyme involves a self-maturation process in which the active site pyruvoyl group is generated from an internal serine residue via an autocatalytic post-translational modification. Two non-identical subunits are generated from the proenzyme in this reaction, and the pyruvate is formed at the N-terminus of the alpha chain, which is derived from the carboxyl end of the proenzyme. The post-translation cleavage follows an unusual pathway, termed non-hydrolytic serinolysis, in which the side chain hydroxyl group of the serine supplies its oxygen atom to form the C-terminus of the beta chain, while the remainder of the serine residue undergoes an oxidative deamination to produce ammonia and the pyruvoyl group blocking the N-terminus of the alpha chain.

It carries out the reaction S-adenosyl-L-methionine + H(+) = S-adenosyl 3-(methylsulfanyl)propylamine + CO2. Its pathway is amine and polyamine biosynthesis; S-adenosylmethioninamine biosynthesis; S-adenosylmethioninamine from S-adenosyl-L-methionine: step 1/1. Catalyzes the decarboxylation of S-adenosylmethionine to S-adenosylmethioninamine (dcAdoMet), the propylamine donor required for the synthesis of the polyamines spermine and spermidine from the diamine putrescine. The polypeptide is S-adenosylmethionine decarboxylase proenzyme (Pectobacterium atrosepticum (strain SCRI 1043 / ATCC BAA-672) (Erwinia carotovora subsp. atroseptica)).